The primary structure comprises 201 residues: Myosin regulatory light chain 2 (201 aa).

The tract at residues 1 to 48 (MADKDKKVKKKKAKEDAPAEEAPAAAAPAGDRQSSRGSRKAKRTGSNV) is disordered. The span at 20-29 (EEAPAAAAPA) shows a compositional bias: low complexity. Ser46 bears the Phosphoserine mark. 3 EF-hand domains span residues 55-90 (KQVA…LGRL), 125-158 (DEDD…WGDK), and 159-194 (FSAD…SAEE). Asp68, Asp70, Asp72, and Asp79 together coordinate Ca(2+).

As to quaternary structure, myosin is a hexamer of 2 heavy chains and 4 light chains.

This chain is Myosin regulatory light chain 2, found in Bombyx mori (Silk moth).